Reading from the N-terminus, the 1078-residue chain is Exportin-1 (1078 aa).

The Importin N-terminal domain maps to 34–100 (AQQVLTQFQA…RNYIVAVMIK (67 aa)).

The protein belongs to the exportin family. Interacts with php4.

It is found in the nucleus. Receptor for the leucine-rich nuclear export signal (NES). This chain is Exportin-1 (xpo1), found in Schizosaccharomyces pombe (strain 972 / ATCC 24843) (Fission yeast).